Reading from the N-terminus, the 256-residue chain is MAVGKNKRLSKGKKGLKKKVVDPFTRKDWFDIKAPTTFENRNVGKTLINRSTGLKNAADGLKGRVFEVCLADLQGSEDHSYRKIKLRVDEVQGKNLLTNFHGLDFTSDKLRSLVRKWQSLVEANVTVKTADDYVLRVFAIAFTKRQANQIKKTTYAQSSKLREVRKKMIEIMQREVSNCTLAQLTSKLIPEVIGREIEKSTQTIFPLQNVHIRKVKLLKQPKFDLGSLLALHGEGSTEEKGKKVSSGFKDVVLESV.

N-acetylalanine; partial is present on Ala2.

Belongs to the eukaryotic ribosomal protein eS1 family. Component of the small ribosomal subunit. Mature ribosomes consist of a small (40S) and a large (60S) subunit. The 40S subunit contains about 33 different proteins and 1 molecule of RNA (18S). The 60S subunit contains about 49 different proteins and 3 molecules of RNA (25S, 5.8S and 5S).

It localises to the cytoplasm. The protein is Small ribosomal subunit protein eS1 of Candida tropicalis (strain ATCC MYA-3404 / T1) (Yeast).